The following is a 725-amino-acid chain: Ribosomal RNA large subunit methyltransferase K/L (725 aa).

In terms of domain architecture, THUMP spans 45–156 (SGYRACLWSR…RGRLSLGIDL (112 aa)).

It belongs to the methyltransferase superfamily. RlmKL family.

Its subcellular location is the cytoplasm. It carries out the reaction guanosine(2445) in 23S rRNA + S-adenosyl-L-methionine = N(2)-methylguanosine(2445) in 23S rRNA + S-adenosyl-L-homocysteine + H(+). The catalysed reaction is guanosine(2069) in 23S rRNA + S-adenosyl-L-methionine = N(2)-methylguanosine(2069) in 23S rRNA + S-adenosyl-L-homocysteine + H(+). Functionally, specifically methylates the guanine in position 2445 (m2G2445) and the guanine in position 2069 (m7G2069) of 23S rRNA. This is Ribosomal RNA large subunit methyltransferase K/L from Marinobacter nauticus (strain ATCC 700491 / DSM 11845 / VT8) (Marinobacter aquaeolei).